Reading from the N-terminus, the 119-residue chain is Basic phospholipase A2 taipoxin alpha chain (119 aa).

Intrachain disulfides connect cysteine 11/cysteine 72, cysteine 27/cysteine 118, cysteine 29/cysteine 45, cysteine 44/cysteine 99, cysteine 51/cysteine 92, cysteine 61/cysteine 85, and cysteine 79/cysteine 90. 3 residues coordinate Ca(2+): tyrosine 28, glycine 30, and glycine 32. The active site involves histidine 48. Aspartate 49 provides a ligand contact to Ca(2+). Residue aspartate 93 is part of the active site.

This sequence belongs to the phospholipase A2 family. Group I subfamily. D49 sub-subfamily. In terms of assembly, heterotrimer of alpha, beta, and gamma chains; non-covalently linked. Ca(2+) serves as cofactor. As to expression, expressed by the venom gland.

It is found in the secreted. The catalysed reaction is a 1,2-diacyl-sn-glycero-3-phosphocholine + H2O = a 1-acyl-sn-glycero-3-phosphocholine + a fatty acid + H(+). Heterotrimer: Snake venom phospholipase A2 (PLA2) heterotrimer that acts as a potent presynaptic neurotoxin by blocking synaptic transmission and synaptic vesicle recycling. May act by binding in a calcium-dependent fashion to neurotonal pentraxin-1 (NPTX1) and neurotonal pentraxin-2 (NPTX2), but not to neuronal pentraxin receptor (NPTXR). Also binds to taipoxin-associated calcium binding protein 49 (RCN2), a protein localized in the lumen of endoplasmic reticulum. In terms of biological role, monomer (alpha chain): Snake venom phospholipase A2 (PLA2) alpha chain that possesses the same high enzymatic activity as the heterotrimer. PLA2 catalyzes the calcium-dependent hydrolysis of the 2-acyl groups in 3-sn-phosphoglycerides. The protein is Basic phospholipase A2 taipoxin alpha chain of Oxyuranus scutellatus scutellatus (Australian taipan).